Here is a 341-residue protein sequence, read N- to C-terminus: Transcription factor JunD (341 aa).

A disordered region spans residues 21–49 (VAGAAGAPGGGGFAPPGRAFPGAPPTSSM). The Menin-binding motif (MBM) motif lies at 35-47 (PPGRAFPGAPPTS). The short motif at 51 to 60 (KKDALTLSLA) is the MAP kinase docking motif; essential for its phosphorylation element. The interval 65–85 (AGLKPGSATAPSALRPDGAPD) is disordered. S90 carries the post-translational modification Phosphoserine. Phosphoserine; by MAPK8 is present on S100. Phosphothreonine is present on T117. Positions 155–176 (AATAATSGAPAPPAPADLAATP) are disordered. A phosphoserine mark is found at S245, S249, and S253. The interval 262–289 (RIKAERKRLRNRIAASKCRKRKLERISR) is basic motif. The region spanning 262 to 325 (RIKAERKRLR…AQLKQKVLSH (64 aa)) is the bZIP domain. The tract at residues 290 to 318 (LEEKVKTLKSQNTELASTASLLREQVAQL) is leucine-zipper.

It belongs to the bZIP family. Jun subfamily. As to quaternary structure, heterodimer; binds DNA as a heterodimer. Component of an AP-1 transcription factor complex composed of JUN-FOS heterodimers. As part of the AP-1 transcription factor complex, forms heterodimers with FOS proteins, thereby binding to the AP-1 consensus sequence and stimulating transcription. Forms heterodimers with FOSB; thereby binding to the AP-1 consensus sequence. Interacts (via MBM motif) with MEN1; this interaction represses transcriptional activation. Interacts with MAPK10; this interaction is inhibited in the presence of MEN1. Post-translationally, phosphorylated by MAP kinases MAPK8 and MAPK10; phosphorylation is inhibited in the presence of MEN1.

The protein localises to the nucleus. Transcription factor binding AP-1 sites. Heterodimerizes with proteins of the FOS family to form an AP-1 transcription factor complex, thereby enhancing their DNA binding activity to an AP-1 consensus sequence 3'-TGA[GC]TCA-5' and enhancing their transcriptional activity. The polypeptide is Transcription factor JunD (Jund) (Rattus norvegicus (Rat)).